The following is a 2058-amino-acid chain: E3 ubiquitin-protein ligase ubr-1 (2058 aa).

A UBR-type zinc finger spans residues Gln93–Lys164. The tract at residues Val1107 to Val1175 is disordered. Positions Pro1108–Ala1119 are enriched in low complexity. Basic and acidic residues-rich tracts occupy residues Glu1123–Gln1138 and Lys1153–Val1175. The segment at Leu1217–Arg1335 adopts an RING-type; atypical zinc-finger fold. Disordered stretches follow at residues Leu1381–Asn1416 and Pro1475–Lys1499. Residues Lys1388 to His1397 are compositionally biased toward basic residues. The segment covering Ser1398 to Asp1413 has biased composition (basic and acidic residues). Positions Gly1486–Gln1495 are enriched in polar residues. Residues Ile1695 to Trp1715 traverse the membrane as a helical segment.

The protein belongs to the E3 ubiquitin-protein ligase UBR1-like family. In terms of assembly, interacts with ubc-1. Component of a complex containing at least ced-3, ubr-1 and possibly ate-1. Within complex interacts with ced-3 (via the p17 subunit); this interaction is required for the ced-3-mediated cleavage and subsequent degradation of the heterochronic protein lin-28. In terms of tissue distribution, expressed in pharyngeal muscles, body wall muscles and a subset of neurons throughout postembryonic development. Prominently expressed in premotor interneurons, but not expressed in ventral cord motor neurons. Weakly expressed in hypodermal seam cells.

The protein resides in the membrane. It catalyses the reaction S-ubiquitinyl-[E2 ubiquitin-conjugating enzyme]-L-cysteine + [acceptor protein]-L-lysine = [E2 ubiquitin-conjugating enzyme]-L-cysteine + N(6)-ubiquitinyl-[acceptor protein]-L-lysine.. It participates in protein modification; protein ubiquitination. E3 ubiquitin-protein ligase which is a component of the N-end rule pathway. Recognizes and binds to proteins bearing specific N-terminal residues that are destabilizing according to the N-end rule, leading to their ubiquitination and subsequent degradation. In complex with ced-3, required for the ced-3-mediated cleavage and subsequent degradation of the heterochronic protein lin-28 to regulate seam cell fate patterning during larval development. Negatively regulates glutamate metabolism through the aspartate aminotransferase got-1.2. Modulation of glutamate levels most likely controls locomotory behavior, in particular backwards locomotion or 'reversals'. This Caenorhabditis elegans protein is E3 ubiquitin-protein ligase ubr-1.